Reading from the N-terminus, the 403-residue chain is Aminomethyltransferase, mitochondrial (403 aa).

Residues 1–28 (MHRIVSVVAPLGFRLQAQPLVQSRPLSS) constitute a mitochondrion transit peptide. Substrate is bound by residues E232 and R261. K368 is modified (N6-succinyllysine). Y399 serves as a coordination point for substrate.

It belongs to the GcvT family. The glycine cleavage system is composed of four proteins: P, T, L and H.

Its subcellular location is the mitochondrion. It catalyses the reaction N(6)-[(R)-S(8)-aminomethyldihydrolipoyl]-L-lysyl-[protein] + (6S)-5,6,7,8-tetrahydrofolate = N(6)-[(R)-dihydrolipoyl]-L-lysyl-[protein] + (6R)-5,10-methylene-5,6,7,8-tetrahydrofolate + NH4(+). Functionally, the glycine cleavage system catalyzes the degradation of glycine. In Mus musculus (Mouse), this protein is Aminomethyltransferase, mitochondrial.